The sequence spans 1037 residues: Multidrug resistance protein MdtF (1037 aa).

Over 1-9 (MANYFIDRP) the chain is Cytoplasmic. A helical membrane pass occupies residues 10-30 (VFAWVLAIIMMLAGGLAIMNL). At 31–338 (PVAQYPQIAP…TTPFIEISIQ (308 aa)) the chain is on the periplasmic side. A helical transmembrane segment spans residues 339 to 359 (EVFKTLVEAIILVFLVMYLFL). Over 360–369 (QNFRATIIPT) the chain is Cytoplasmic. Residues 370–390 (IAVPVVILGTFAILSAVGFTI) traverse the membrane as a helical segment. Topologically, residues 391-392 (NT) are periplasmic. Residues 393 to 413 (LTMFGMVLAIGLLVDDAIVVV) traverse the membrane as a helical segment. Over 414 to 441 (ENVERVIAEDKLPPKEATHKSMGQIQRA) the chain is Cytoplasmic. A helical transmembrane segment spans residues 442–462 (LVGIAVVLSAVFMPMAFMSGA). Residues 463–471 (TGEIYRQFS) lie on the Periplasmic side of the membrane. A helical membrane pass occupies residues 472 to 492 (ITLISSMLLSVFVAMSLTPAL). Residues 493 to 534 (CATILKAAPEGGHKPNALFARFNTLFEKSTQHYTDSTRSLLR) lie on the Cytoplasmic side of the membrane. A helical transmembrane segment spans residues 535–555 (CTGRYMVIYLLICAGMAVLFL). Over 556 to 870 (RTPTSFLPEE…SYQEALSSNQ (315 aa)) the chain is Periplasmic. The chain crosses the membrane as a helical span at residues 871-891 (APALYAISLVVVFLALAALYE). Residue Ser892 is a topological domain, cytoplasmic. The helical transmembrane segment at 893–913 (WSIPFSVMLVVPLGVVGALLA) threads the bilayer. The Periplasmic portion of the chain corresponds to 914-927 (TDLRGLSNDVYFQV). A helical membrane pass occupies residues 928–948 (GLLTTIGLSAKNAILIVEFAV). Over 949 to 972 (EMMQKEGKTPIEAIIEAARMRLRP) the chain is Cytoplasmic. Residues 973–993 (ILMTSLAFILGVLPLVISHGA) traverse the membrane as a helical segment. Residues 994-1006 (GSGAQNAVGTGVM) lie on the Periplasmic side of the membrane. The chain crosses the membrane as a helical span at residues 1007 to 1027 (GGMFAATVLAIYFVPVFFVVV). Topologically, residues 1028 to 1037 (EHLFARFKKA) are cytoplasmic.

This sequence belongs to the resistance-nodulation-cell division (RND) (TC 2.A.6) family. In terms of assembly, homotrimer. Part of the tripartite efflux system MdtEF-TolC, which is composed of an inner membrane transporter, MdtF, a membrane fusion protein, MdtE, and an outer membrane component, TolC. The complex forms a large protein conduit and can translocate molecules across both the inner and outer membranes.

It localises to the cell inner membrane. Part of the tripartite efflux system MdtEF-TolC, which confers resistance to various compounds. The sequence is that of Multidrug resistance protein MdtF (mdtF) from Escherichia coli O157:H7.